The chain runs to 1035 residues: Alpha-mannosidase B (1035 aa).

The signal sequence occupies residues 1 to 20 (MGKVLILFLFVLLLITFINC). N-linked (GlcNAc...) asparagine glycosylation is found at Asn19 and Asn30. Zn(2+) is bound by residues His47 and Asp49. Asn63 is a glycosylation site (N-linked (GlcNAc...) asparagine). Asp161 contacts Zn(2+). The active-site Nucleophile is Asp161. N-linked (GlcNAc...) asparagine glycans are attached at residues Asn245, Asn250, Asn270, Asn309, Asn327, and Asn438. His446 provides a ligand contact to Zn(2+). N-linked (GlcNAc...) asparagine glycosylation is found at Asn487, Asn497, Asn503, Asn710, Asn719, Asn735, Asn792, Asn852, Asn863, Asn880, Asn962, and Asn993.

This sequence belongs to the glycosyl hydrolase 38 family. Zn(2+) is required as a cofactor.

It is found in the secreted. It catalyses the reaction Hydrolysis of terminal, non-reducing alpha-D-mannose residues in alpha-D-mannosides.. The polypeptide is Alpha-mannosidase B (manB) (Dictyostelium discoideum (Social amoeba)).